The primary structure comprises 192 residues: uncharacterized protein (192 aa).

The region spanning 29 to 160 (QRQAAVLIPV…PLDVYRRGNS (132 aa)) is the Nudix hydrolase domain. A Nudix box motif is present at residues 67–89 (GAVDSTDASLIAAALREAQEEVA). 2 residues coordinate Mg(2+): glutamate 83 and glutamate 87.

It belongs to the Nudix hydrolase family. PCD1 subfamily. Mn(2+) is required as a cofactor. Mg(2+) serves as cofactor.

Functionally, probably mediates the hydrolysis of some nucleoside diphosphate derivatives. This is an uncharacterized protein from Salmonella dublin (strain CT_02021853).